The chain runs to 322 residues: Ribonucleoside-diphosphate reductase subunit beta nrdF1 (322 aa).

Fe cation-binding residues include Asp70, Glu101, and His104. Residue Tyr108 is part of the active site. 3 residues coordinate Fe cation: Glu161, Glu195, and His198.

This sequence belongs to the ribonucleoside diphosphate reductase small chain family. In terms of assembly, tetramer of two alpha and two beta subunits. It depends on Fe cation as a cofactor.

It catalyses the reaction a 2'-deoxyribonucleoside 5'-diphosphate + [thioredoxin]-disulfide + H2O = a ribonucleoside 5'-diphosphate + [thioredoxin]-dithiol. Functionally, provides the precursors necessary for DNA synthesis. Catalyzes the biosynthesis of deoxyribonucleotides from the corresponding ribonucleotides. The sequence is that of Ribonucleoside-diphosphate reductase subunit beta nrdF1 (nrdF1) from Mycobacterium tuberculosis (strain CDC 1551 / Oshkosh).